The chain runs to 396 residues: L-lactate dehydrogenase (396 aa).

In terms of domain architecture, FMN hydroxy acid dehydrogenase spans M1–G380. Y24 provides a ligand contact to substrate. Positions 106 and 127 each coordinate FMN. Position 129 (Y129) interacts with substrate. T155 serves as a coordination point for FMN. R164 lines the substrate pocket. Residue K251 coordinates FMN. H275 acts as the Proton acceptor in catalysis. R278 contributes to the substrate binding site. D306–R330 provides a ligand contact to FMN.

This sequence belongs to the FMN-dependent alpha-hydroxy acid dehydrogenase family. FMN serves as cofactor.

It localises to the cell inner membrane. The enzyme catalyses (S)-lactate + A = pyruvate + AH2. Catalyzes the conversion of L-lactate to pyruvate. Is coupled to the respiratory chain. This is L-lactate dehydrogenase from Citrobacter koseri (strain ATCC BAA-895 / CDC 4225-83 / SGSC4696).